We begin with the raw amino-acid sequence, 256 residues long: 5-keto-4-deoxy-D-glucarate aldolase (256 aa).

Residue His-50 is the Proton acceptor of the active site. Residue Gln-151 participates in substrate binding. Glu-153 serves as a coordination point for Mg(2+). Ser-178 and Asp-179 together coordinate substrate. Asp-179 contacts Mg(2+).

Belongs to the HpcH/HpaI aldolase family. KDGluc aldolase subfamily. As to quaternary structure, homohexamer; trimer of dimers. Mg(2+) serves as cofactor.

It catalyses the reaction 5-dehydro-4-deoxy-D-glucarate = 2-hydroxy-3-oxopropanoate + pyruvate. The enzyme catalyses 2-dehydro-3-deoxy-D-glucarate = 2-hydroxy-3-oxopropanoate + pyruvate. Its pathway is carbohydrate acid metabolism; galactarate degradation; D-glycerate from galactarate: step 2/3. Functionally, catalyzes the reversible retro-aldol cleavage of both 5-keto-4-deoxy-D-glucarate and 2-keto-3-deoxy-D-glucarate to pyruvate and tartronic semialdehyde. In Escherichia fergusonii (strain ATCC 35469 / DSM 13698 / CCUG 18766 / IAM 14443 / JCM 21226 / LMG 7866 / NBRC 102419 / NCTC 12128 / CDC 0568-73), this protein is 5-keto-4-deoxy-D-glucarate aldolase.